The chain runs to 494 residues: Cobyrinate a,c-diamide synthase (494 aa).

The GATase cobBQ-type domain occupies 270–475 (KIGVALDEAF…AHLHGVAYRE (206 aa)). Catalysis depends on cysteine 352, which acts as the Nucleophile.

This sequence belongs to the CobB/CbiA family. Mg(2+) serves as cofactor.

The enzyme catalyses cob(II)yrinate + 2 L-glutamine + 2 ATP + 2 H2O = cob(II)yrinate a,c diamide + 2 L-glutamate + 2 ADP + 2 phosphate + 2 H(+). The catalysed reaction is Ni-sirohydrochlorin + 2 L-glutamine + 2 ATP + 2 H2O = Ni-sirohydrochlorin a,c-diamide + 2 L-glutamate + 2 ADP + 2 phosphate + 2 H(+). It functions in the pathway cofactor biosynthesis; adenosylcobalamin biosynthesis; cob(II)yrinate a,c-diamide from sirohydrochlorin (anaerobic route): step 10/10. In terms of biological role, catalyzes the ATP-dependent amidation of the two carboxylate groups at positions a and c of cobyrinate, using either L-glutamine or ammonia as the nitrogen source (Potential). Involved in the biosynthesis of the unique nickel-containing tetrapyrrole coenzyme F430, the prosthetic group of methyl-coenzyme M reductase (MCR), which plays a key role in methanogenesis and anaerobic methane oxidation. Catalyzes the ATP-dependent amidation of the two carboxylate groups at positions a and c of Ni-sirohydrochlorin, using L-glutamine or ammonia as the nitrogen source. Also able to use sirohydrochlorin as substrate, but only produces a monoamide species in a much slower reaction. Unable to use other metallosirohydrochlorins such as sirohaem and Co-sirohydrochlorin. The sequence is that of Cobyrinate a,c-diamide synthase from Methanosarcina barkeri (strain Fusaro / DSM 804).